We begin with the raw amino-acid sequence, 258 residues long: UPF0246 protein YaaA (258 aa).

This sequence belongs to the UPF0246 family.

The sequence is that of UPF0246 protein YaaA from Shigella dysenteriae serotype 1 (strain Sd197).